The primary structure comprises 313 residues: Ras-related GTP-binding protein A (313 aa).

GTP is bound by residues S16, G17, G19, K20, T21, S22, T36, T42, G65, and H127. Residues G17, G19, K20, T21, and S22 each coordinate GDP. GDP contacts are provided by H127 and D130. K142 is covalently cross-linked (Glycyl lysine isopeptide (Lys-Gly) (interchain with G-Cter in ubiquitin)). 2 residues coordinate GDP: L148 and I164. Residue I164 coordinates GTP. Glycyl lysine isopeptide (Lys-Gly) (interchain with G-Cter in ubiquitin) cross-links involve residues K220, K230, and K244. At S309 the chain carries Phosphoserine.

It belongs to the GTR/RAG GTP-binding protein family. As to quaternary structure, can occur as a homodimer or as a heterodimer with RRAGC or RRAGD in a sequence-independent manner; heterodimerization stabilizes proteins of the heterodimer. The GTP-bound form of RRAGA (in complex with the GDP-bound form of RRAGC or RRAGD) interacts with RPTOR, thereby promoting recruitment of mTORC1 to the lysosomes. The Rag heterodimer interacts with SLC38A9; the probable amino acid sensor. The Rag heterodimer interacts with the Ragulator complex. The GTP-bound form of RRAGA interacts with NOL8. Component of the lysosomal folliculin complex (LFC), composed of FLCN, FNIP1 (or FNIP2), RagA/RRAGA or RagB/RRAGB GDP-bound, RagC/RRAGC or RagD/RRAGD GTP-bound, and Ragulator. Interacts with SH3BP4; the interaction with this negative regulator is most probably direct, preferentially occurs with the inactive GDP-bound form of RRAGA and is negatively regulated by amino acids. Interacts (polyubiquitinated) with TSC2. Interacts with SESN1, SESN2 and SESN3. Interacts with PIP4P1. Interacts with GPR137B. Interacts with WDR83; this interaction regulates the spatiotemporal localization of mTORC1 to the lysosomal surface. Post-translationally, polybiquitinated via 'Lys-63'-linked polyubiquitination by RNF152 in response to amino acid starvation: polyubiquitination of the GDP-bound inactive form by RNF152 promotes RRAGA inactivation and interaction with the GATOR1 complex. This does not affect RRAGA degradation.

It localises to the cytoplasm. The protein resides in the nucleus. It is found in the lysosome membrane. It carries out the reaction GTP + H2O = GDP + phosphate + H(+). Its activity is regulated as follows. The activation of GTP-binding proteins is generally mediated by a guanine exchange factor (GEF), while inactivation through hydrolysis of bound GTP is catalyzed by a GTPase activating protein (GAP). The Ragulator complex functions as a GEF and promotes the active GTP-bound form. The GATOR1 complex functions as a GAP and stimulates RRAGA GTPase activity to turn it into its inactive GDP-bound form, preventing mTORC1 recruitment and activation. Guanine nucleotide-binding protein that plays a crucial role in the cellular response to amino acid availability through regulation of the mTORC1 signaling cascade. Forms heterodimeric Rag complexes with RagC/RRAGC or RagD/RRAGD and cycles between an inactive GDP-bound and an active GTP-bound form: RagA/RRAGA is in its active form when GTP-bound RagA/RRAGA forms a complex with GDP-bound RagC/RRAGC (or RagD/RRAGD) and in an inactive form when GDP-bound RagA/RRAGA heterodimerizes with GTP-bound RagC/RRAGC (or RagD/RRAGD). In its GTP-bound active form, promotes the recruitment of mTORC1 to the lysosomes and its subsequent activation by the GTPase RHEB. Involved in the RCC1/Ran-GTPase pathway. May play a direct role in a TNF-alpha signaling pathway leading to induction of cell death. The polypeptide is Ras-related GTP-binding protein A (Bos taurus (Bovine)).